A 219-amino-acid chain; its full sequence is ADP-sugar pyrophosphatase (219 aa).

The residue at position 1 (methionine 1) is an N-acetylmethionine. Residues serine 3 and serine 10 each carry the phosphoserine modification. Tryptophan 28 serves as a coordination point for substrate. Residue lysine 42 forms a Glycyl lysine isopeptide (Lys-Gly) (interchain with G-Cter in SUMO2) linkage. Phosphothreonine is present on threonine 45. Substrate is bound by residues 46–47 (WE) and arginine 51. In terms of domain architecture, Nudix hydrolase spans 57–197 (QTADGVAVIP…EEHLTVDARV (141 aa)). Phosphotyrosine is present on tyrosine 74. Arginine 84 is a binding site for substrate. A Mg(2+)-binding site is contributed by alanine 96. The short motif at 97 to 118 (GLIDDGETPEAAALRELEEETG) is the Nudix box element. Leucine 98 contributes to the substrate binding site. Positions 112 and 116 each coordinate Mg(2+). A substrate-binding site is contributed by aspartate 133. Residue glutamate 166 participates in Mg(2+) binding. N6-acetyllysine occurs at positions 210 and 218.

The protein belongs to the Nudix hydrolase family. Homodimer. Interacts with PARG. It depends on Mg(2+) as a cofactor. Post-translationally, phosphorylation at Thr-45 is required for homodimer stability; dephosphorylation results in destabilization of the homodimer. Dephosphorylation at Thr-45 promotes the ATP-synthesis activity. In terms of tissue distribution, widely expressed. Most abundant in liver.

It is found in the nucleus. The catalysed reaction is D-ribose 5-phosphate + ATP + H(+) = ADP-D-ribose + diphosphate. It catalyses the reaction ADP-D-ribose + H2O = D-ribose 5-phosphate + AMP + 2 H(+). It carries out the reaction 8-oxo-dGDP + H2O = 8-oxo-dGMP + phosphate + H(+). In terms of biological role, enzyme that can either act as an ADP-sugar pyrophosphatase in absence of diphosphate or catalyze the synthesis of ATP in presence of diphosphate. In absence of diphosphate, hydrolyzes with similar activities various modified nucleoside diphosphates such as ADP-ribose, ADP-mannose, ADP-glucose, 8-oxo-GDP and 8-oxo-dGDP. Can also hydrolyze other nucleotide sugars with low activity. In presence of diphosphate, mediates the synthesis of ATP in the nucleus by catalyzing the conversion of ADP-ribose to ATP and ribose 5-phosphate. Nuclear ATP synthesis takes place when dephosphorylated at Thr-45. Nuclear ATP generation is required for extensive chromatin remodeling events that are energy-consuming. Does not play a role in U8 snoRNA decapping activity. Binds U8 snoRNA. This chain is ADP-sugar pyrophosphatase (NUDT5), found in Homo sapiens (Human).